The following is a 346-amino-acid chain: Phosphoribosylformylglycinamidine cyclo-ligase (346 aa).

The protein belongs to the AIR synthase family.

Its subcellular location is the cytoplasm. The catalysed reaction is 2-formamido-N(1)-(5-O-phospho-beta-D-ribosyl)acetamidine + ATP = 5-amino-1-(5-phospho-beta-D-ribosyl)imidazole + ADP + phosphate + H(+). It functions in the pathway purine metabolism; IMP biosynthesis via de novo pathway; 5-amino-1-(5-phospho-D-ribosyl)imidazole from N(2)-formyl-N(1)-(5-phospho-D-ribosyl)glycinamide: step 2/2. This Methylobacillus flagellatus (strain ATCC 51484 / DSM 6875 / VKM B-1610 / KT) protein is Phosphoribosylformylglycinamidine cyclo-ligase.